The following is a 557-amino-acid chain: Acid-sensing ion channel 1B (557 aa).

The Cytoplasmic segment spans residues 1 to 98 (MVRITCTISF…SIRQGLWALV (98 aa)). Over residues 36–45 (KDGEQGKYQE) the composition is skewed to basic and acidic residues. A disordered region spans residues 36-57 (KDGEQGKYQEEGDDPDAYDGPE). The segment covering 46–57 (EGDDPDAYDGPE) has biased composition (acidic residues). The helical transmembrane segment at 99 to 115 (FLLAISMFLLQVVDRVI) threads the bilayer. Over 116–460 (YYLQYDYVTL…ETIEQKKAYE (345 aa)) the chain is Extracellular. N-linked (GlcNAc...) asparagine glycosylation is found at asparagine 133 and asparagine 194. 7 disulfides stabilise this stretch: cysteine 142–cysteine 229, cysteine 207–cysteine 214, cysteine 325–cysteine 400, cysteine 343–cysteine 396, cysteine 347–cysteine 394, cysteine 356–cysteine 378, and cysteine 358–cysteine 370. N-linked (GlcNAc...) asparagine glycosylation is found at asparagine 401 and asparagine 428. The chain crosses the membrane as a discontinuously helical span at residues 461 to 491 (LAGLLGDIGGQMGLFIGASILTILELFDYLY). Residues 477–479 (GAS) carry the GAS motif; ion selectivity filter motif. Topologically, residues 492 to 557 (EVIKFKLCRC…GQGNFEDFTC (66 aa)) are cytoplasmic.

The protein belongs to the amiloride-sensitive sodium channel (TC 1.A.6) family. ASIC1 subfamily. In terms of assembly, homotrimer. Heterotrimer; with other ASIC proteins producing channel with different properties. Expressed in central nervous system.

It localises to the cell membrane. The protein localises to the postsynaptic cell membrane. Its subcellular location is the cell projection. The protein resides in the dendrite. It catalyses the reaction Na(+)(in) = Na(+)(out). The catalysed reaction is K(+)(in) = K(+)(out). It carries out the reaction Li(+)(in) = Li(+)(out). The enzyme catalyses Ca(2+)(in) = Ca(2+)(out). Its activity is regulated as follows. Inhibited by the diuretic drug amiloride. Forms voltage-independent, pH-gated trimeric sodium channels that act as postsynaptic excitatory receptors in the nervous system, playing a crucial role in regulating synaptic plasticity, learning, and memory. Upon extracellular pH drop this channel elicits transient, fast activating, and completely desensitizing inward currents. Displays high selectivity for sodium ions but can also permit the permeation of other cations. This chain is Acid-sensing ion channel 1B (asic1b), found in Danio rerio (Zebrafish).